The chain runs to 351 residues: Glycerol-1-phosphate dehydrogenase [NAD(P)+] (351 aa).

NAD(+)-binding positions include 97–101 (GKVID) and 119–122 (TSPS). A substrate-binding site is contributed by D124. S128 is a binding site for NAD(+). D171 is a binding site for substrate. Zn(2+) is bound by residues D171 and H251. Position 255 (H255) interacts with substrate. Residue H267 coordinates Zn(2+).

The protein belongs to the glycerol-1-phosphate dehydrogenase family. Homodimer. Zn(2+) is required as a cofactor.

Its subcellular location is the cytoplasm. It catalyses the reaction sn-glycerol 1-phosphate + NAD(+) = dihydroxyacetone phosphate + NADH + H(+). The enzyme catalyses sn-glycerol 1-phosphate + NADP(+) = dihydroxyacetone phosphate + NADPH + H(+). Its pathway is membrane lipid metabolism; glycerophospholipid metabolism. Functionally, catalyzes the NAD(P)H-dependent reduction of dihydroxyacetonephosphate (DHAP or glycerone phosphate) to glycerol 1-phosphate (G1P). The G1P thus generated is used as the glycerophosphate backbone of phospholipids in the cellular membranes of Archaea. The sequence is that of Glycerol-1-phosphate dehydrogenase [NAD(P)+] from Saccharolobus solfataricus (strain ATCC 35092 / DSM 1617 / JCM 11322 / P2) (Sulfolobus solfataricus).